Here is a 192-residue protein sequence, read N- to C-terminus: ATP synthase protein MI25 (192 aa).

Residues 29 to 49 form a helical membrane-spanning segment; the sequence is ISIYNEEMIVARCFIGFLIFS.

The protein belongs to the ATPase protein MI25 family. F-type ATPases have 2 components, CF(1) - the catalytic core - and CF(0) - the membrane proton channel. CF(1) has five subunits: alpha(3), beta(3), gamma(1), delta(1), epsilon(1). CF(0) has three main subunits: a, b and c.

The protein resides in the mitochondrion membrane. Functionally, this is one of the chains of the nonenzymatic component (CF(0) subunit) of the mitochondrial ATPase complex. This chain is ATP synthase protein MI25, found in Triticum timopheevii (Timopheev's wheat).